We begin with the raw amino-acid sequence, 98 residues long: NADH-ubiquinone oxidoreductase chain 4L (98 aa).

3 helical membrane passes run 1 to 21 (MPSI…GMLV), 29 to 49 (SLLC…LTAL), and 61 to 81 (IILL…LVMV).

It belongs to the complex I subunit 4L family. In terms of assembly, core subunit of respiratory chain NADH dehydrogenase (Complex I) which is composed of 45 different subunits.

The protein localises to the mitochondrion inner membrane. The enzyme catalyses a ubiquinone + NADH + 5 H(+)(in) = a ubiquinol + NAD(+) + 4 H(+)(out). Functionally, core subunit of the mitochondrial membrane respiratory chain NADH dehydrogenase (Complex I) which catalyzes electron transfer from NADH through the respiratory chain, using ubiquinone as an electron acceptor. Part of the enzyme membrane arm which is embedded in the lipid bilayer and involved in proton translocation. In Oryctolagus cuniculus (Rabbit), this protein is NADH-ubiquinone oxidoreductase chain 4L (MT-ND4L).